We begin with the raw amino-acid sequence, 103 residues long: Small ribosomal subunit protein bS6c (103 aa).

This sequence belongs to the bacterial ribosomal protein bS6 family.

It localises to the plastid. The protein localises to the chloroplast. Its function is as follows. Binds together with bS18 to 16S ribosomal RNA. The chain is Small ribosomal subunit protein bS6c from Thalassiosira pseudonana (Marine diatom).